Reading from the N-terminus, the 179-residue chain is Stathmin-2 (179 aa).

A membrane attachment region spans residues 1–26; the sequence is MAKTAMAYKEKMKELSMLSLICSCFY. S16, S50, S62, S73, S80, and S97 each carry phosphoserine. In terms of domain architecture, SLD spans 38–179; the sequence is DDMEVKQINK…NKELQVELSG (142 aa). The interval 39–96 is regulatory/phosphorylation domain; that stretch reads DMEVKQINKRASGQAFELILKPPSPVSEAPRTLASPKKKELSLEEIQKKLEAAEERRK. A coiled-coil region spans residues 74–179; sequence PKKKELSLEE…NKELQVELSG (106 aa).

Belongs to the stathmin family. In terms of tissue distribution, expression is neuron-specific and found in cerebellum, forebrain, midbrain, tectum and spinal cord.

It localises to the cytoplasm. The protein localises to the perinuclear region. The protein resides in the cell projection. It is found in the growth cone. Its subcellular location is the membrane. It localises to the axon. The protein localises to the lamellipodium. Functionally, is a key regulator of neurite extension through regulation of microtubule instabilily. The protein is Stathmin-2 (STMN2) of Gallus gallus (Chicken).